We begin with the raw amino-acid sequence, 91 residues long: Probable Fe(2+)-trafficking protein (91 aa).

It belongs to the Fe(2+)-trafficking protein family. As to quaternary structure, monomer.

Could be a mediator in iron transactions between iron acquisition and iron-requiring processes, such as synthesis and/or repair of Fe-S clusters in biosynthetic enzymes. In Escherichia coli O7:K1 (strain IAI39 / ExPEC), this protein is Probable Fe(2+)-trafficking protein.